Here is a 259-residue protein sequence, read N- to C-terminus: Phosphatidylserine decarboxylase proenzyme (259 aa).

Active-site charge relay system; for autoendoproteolytic cleavage activity residues include D86, H142, and S226. The Schiff-base intermediate with substrate; via pyruvic acid; for decarboxylase activity role is filled by S226. S226 carries the post-translational modification Pyruvic acid (Ser); by autocatalysis.

It belongs to the phosphatidylserine decarboxylase family. PSD-B subfamily. Prokaryotic type I sub-subfamily. As to quaternary structure, heterodimer of a large membrane-associated beta subunit and a small pyruvoyl-containing alpha subunit. Pyruvate serves as cofactor. Post-translationally, is synthesized initially as an inactive proenzyme. Formation of the active enzyme involves a self-maturation process in which the active site pyruvoyl group is generated from an internal serine residue via an autocatalytic post-translational modification. Two non-identical subunits are generated from the proenzyme in this reaction, and the pyruvate is formed at the N-terminus of the alpha chain, which is derived from the carboxyl end of the proenzyme. The autoendoproteolytic cleavage occurs by a canonical serine protease mechanism, in which the side chain hydroxyl group of the serine supplies its oxygen atom to form the C-terminus of the beta chain, while the remainder of the serine residue undergoes an oxidative deamination to produce ammonia and the pyruvoyl prosthetic group on the alpha chain. During this reaction, the Ser that is part of the protease active site of the proenzyme becomes the pyruvoyl prosthetic group, which constitutes an essential element of the active site of the mature decarboxylase.

The protein localises to the cell membrane. It carries out the reaction a 1,2-diacyl-sn-glycero-3-phospho-L-serine + H(+) = a 1,2-diacyl-sn-glycero-3-phosphoethanolamine + CO2. It participates in phospholipid metabolism; phosphatidylethanolamine biosynthesis; phosphatidylethanolamine from CDP-diacylglycerol: step 2/2. Its function is as follows. Catalyzes the formation of phosphatidylethanolamine (PtdEtn) from phosphatidylserine (PtdSer). This Halalkalibacterium halodurans (strain ATCC BAA-125 / DSM 18197 / FERM 7344 / JCM 9153 / C-125) (Bacillus halodurans) protein is Phosphatidylserine decarboxylase proenzyme.